The chain runs to 849 residues: A-kinase anchor protein 4 (849 aa).

Positions 1-188 (MIAYCGTTTM…MAASKNTNNN (188 aa)) are excised as a propeptide. A phosphoserine mark is found at serine 96, serine 130, serine 190, and serine 204. Positions 183-205 (KNTNNNQSPSNPATKSPSNQRSV) are enriched in polar residues. The tract at residues 183 to 210 (KNTNNNQSPSNPATKSPSNQRSVATPEG) is disordered. Threonine 207 is subject to Phosphothreonine. Phosphoserine occurs at positions 213, 226, and 271. The tract at residues 219–232 (FYVNRLSSLVIQMA) is PKA-RI and PKA-RII subunit binding domain. Residue tyrosine 301 is modified to Phosphotyrosine. Residues serine 302, serine 341, serine 431, serine 442, serine 444, serine 463, serine 492, serine 497, and serine 504 each carry the phosphoserine modification. Residues 335-344 (YANQVASDMM) form a PKA-RI-alpha subunit binding domain region. Threonine 506 is subject to Phosphothreonine. Serine 538 carries the post-translational modification Phosphoserine. At serine 583 the chain carries Phosphoserine; by STK33. Serine 628, serine 633, serine 652, and serine 702 each carry phosphoserine.

This sequence belongs to the AKAP110 family. In terms of assembly, interacts with PRKAR1A and PRKAR2A. Interacts with ENO4. Interacts with QRICH2. Phosphorylated by STK33 during sperm flagella assembly. As to expression, expressed in the fibrous sheath of spermatozoa (at protein level). Expressed in step 1 to step 6 spermatids, abundance then increases during steps 8 to 12, abundance decreases thereafter.

Its subcellular location is the cell projection. The protein resides in the cilium. The protein localises to the flagellum. Functionally, major structural component of sperm fibrous sheath. Plays a role in sperm motility. The protein is A-kinase anchor protein 4 of Mus musculus (Mouse).